The chain runs to 2371 residues: Highly reducing polyketide synthase ntnH (2371 aa).

The region spanning 10 to 429 (PSPIAIVGIG…GANAHVILEG (420 aa)) is the Ketosynthase family 3 (KS3) domain. Active-site for beta-ketoacyl synthase activity residues include cysteine 180, histidine 316, and histidine 352. The tract at residues 528–796 (FIFTGQGAQW…NSCLSRGADA (269 aa)) is malonyl-CoA:ACP transacylase (MAT) domain. Residues 858 to 986 (HELLGARVIG…GKVHPGNAST (129 aa)) form an N-terminal hotdog fold region. The tract at residues 858–1142 (HELLGARVIG…GIRFRILENN (285 aa)) is dehydratase (DH) domain. The 288-residue stretch at 858–1145 (HELLGARVIG…FRILENNRSK (288 aa)) folds into the PKS/mFAS DH domain. The Proton acceptor; for dehydratase activity role is filled by histidine 890. Positions 1001–1145 (VRGVISAKWY…FRILENNRSK (145 aa)) are C-terminal hotdog fold. Aspartate 1059 serves as the catalytic Proton donor; for dehydratase activity. Positions 1309 to 1456 (FFQLLGHNKK…FENVTAIMDQ (148 aa)) are methyltransferase (CMet) domain. The enoyl reductase (ER) (ER) domain stretch occupies residues 1669–1968 (GLLSSLQWQG…GHRPIGAICI (300 aa)). Residues 1993–2167 (SYVLIGGLGG…ASVIDLGVME (175 aa)) are ketoreductase (KR) domain. The region spanning 2280-2362 (EDETAVAEFL…DLGKLARSRI (83 aa)) is the Carrier domain. O-(pantetheine 4'-phosphoryl)serine is present on serine 2322.

Its pathway is secondary metabolite biosynthesis; terpenoid biosynthesis. In terms of biological role, highly reducing polyketide synthase; part of the gene cluster that mediates the biosynthesis of the meroterpenoids nectripenoids A and B, as well as cochliquninone D and isocochliquninone E. The pathway probably begins with the HR-PKS ntnH that catalyzes two chain-extension steps to form a reduced triketide, which then primes the SAT domain in the NR-PKS ntnG to initiate three more cycles of extension to give a linear hexaketide corresponding to the polyketide part of nectripenoids. The FAD-dependent monooxygenase ntnJ then performs an oxidative decarboxylation at C11 of the ntnH/ntnG product, via an electrophilic aromatic hydroxylation with concomitant ipso-decarboxylation. The membrane-bound polyprenyl transferase ntnF then introduces a farnesyl group before the FAD-dependent monooxygenase ntnK functions as the first epoxidase on terminal C12'-C13' olefin, followed by a second epoxidation on C7'-C8' catalyzed by ntnA. The terpene cyclase/mutase ntnI then initiates the sequential tricyclic ring formation through protonation of the terminal epoxide and catalyzes the regioselective and stereoselective 6/6/6-tricyclic ring formation. The cytochrome P450 monooxygenase ntnM may then hydroxylate C1'. In Nectria sp, this protein is Highly reducing polyketide synthase ntnH.